A 426-amino-acid chain; its full sequence is Dihydroorotase (426 aa).

The Zn(2+) site is built by His-59 and His-61. Substrate contacts are provided by residues 61 to 63 (HLR) and Asn-93. Residues Asp-151, His-178, and His-232 each contribute to the Zn(2+) site. Asn-279 is a substrate binding site. A Zn(2+)-binding site is contributed by Asp-306. Residue Asp-306 is part of the active site. Residues His-310 and 324-325 (FG) each bind substrate.

It belongs to the metallo-dependent hydrolases superfamily. DHOase family. Class I DHOase subfamily. Zn(2+) serves as cofactor.

It carries out the reaction (S)-dihydroorotate + H2O = N-carbamoyl-L-aspartate + H(+). It participates in pyrimidine metabolism; UMP biosynthesis via de novo pathway; (S)-dihydroorotate from bicarbonate: step 3/3. Its function is as follows. Catalyzes the reversible cyclization of carbamoyl aspartate to dihydroorotate. The sequence is that of Dihydroorotase from Brevibacillus brevis (strain 47 / JCM 6285 / NBRC 100599).